A 307-amino-acid chain; its full sequence is Ribosomal RNA small subunit methyltransferase H (307 aa).

Residues 32-34 (GGH), Asp-52, Phe-78, Asp-99, and Gln-106 contribute to the S-adenosyl-L-methionine site.

Belongs to the methyltransferase superfamily. RsmH family.

The protein resides in the cytoplasm. It carries out the reaction cytidine(1402) in 16S rRNA + S-adenosyl-L-methionine = N(4)-methylcytidine(1402) in 16S rRNA + S-adenosyl-L-homocysteine + H(+). Functionally, specifically methylates the N4 position of cytidine in position 1402 (C1402) of 16S rRNA. The protein is Ribosomal RNA small subunit methyltransferase H of Acinetobacter baumannii (strain SDF).